Reading from the N-terminus, the 406-residue chain is Succinyl-diaminopimelate desuccinylase (406 aa).

Position 95 (His-95) interacts with Zn(2+). Asp-97 is an active-site residue. Asp-128 provides a ligand contact to Zn(2+). Catalysis depends on Glu-162, which acts as the Proton acceptor. Glu-163, Glu-191, and His-377 together coordinate Zn(2+).

The protein belongs to the peptidase M20A family. DapE subfamily. In terms of assembly, homodimer. Zn(2+) serves as cofactor. Requires Co(2+) as cofactor.

The enzyme catalyses N-succinyl-(2S,6S)-2,6-diaminopimelate + H2O = (2S,6S)-2,6-diaminopimelate + succinate. It participates in amino-acid biosynthesis; L-lysine biosynthesis via DAP pathway; LL-2,6-diaminopimelate from (S)-tetrahydrodipicolinate (succinylase route): step 3/3. Its function is as follows. Catalyzes the hydrolysis of N-succinyl-L,L-diaminopimelic acid (SDAP), forming succinate and LL-2,6-diaminopimelate (DAP), an intermediate involved in the bacterial biosynthesis of lysine and meso-diaminopimelic acid, an essential component of bacterial cell walls. This chain is Succinyl-diaminopimelate desuccinylase, found in Polaromonas naphthalenivorans (strain CJ2).